The chain runs to 869 residues: Aconitate hydratase A (869 aa).

Residues cysteine 411, cysteine 477, and cysteine 480 each contribute to the [4Fe-4S] cluster site.

This sequence belongs to the aconitase/IPM isomerase family. In terms of assembly, monomer. The cofactor is [4Fe-4S] cluster.

It carries out the reaction citrate = D-threo-isocitrate. The enzyme catalyses (2S,3R)-3-hydroxybutane-1,2,3-tricarboxylate = 2-methyl-cis-aconitate + H2O. Its pathway is carbohydrate metabolism; tricarboxylic acid cycle; isocitrate from oxaloacetate: step 2/2. It participates in organic acid metabolism; propanoate degradation. Its function is as follows. Involved in the catabolism of short chain fatty acids (SCFA) via the tricarboxylic acid (TCA)(acetyl degradation route) and the 2-methylcitrate cycle I (propionate degradation route). Catalyzes the reversible isomerization of citrate to isocitrate via cis-aconitate. Could catalyze the hydration of 2-methyl-cis-aconitate to yield (2S,3R)-2-methylisocitrate. The apo form of AcnA functions as a RNA-binding regulatory protein. The sequence is that of Aconitate hydratase A from Cupriavidus necator (Alcaligenes eutrophus).